Consider the following 608-residue polypeptide: Aspartate--tRNA(Asp/Asn) ligase (608 aa).

Glu-179 lines the L-aspartate pocket. Residues 203-206 form an aspartate region; it reads QLFK. Arg-225 contributes to the L-aspartate binding site. ATP-binding positions include 225 to 227 and Gln-234; that span reads RDE. His-461 serves as a coordination point for L-aspartate. Glu-494 serves as a coordination point for ATP. Arg-501 provides a ligand contact to L-aspartate. 546–549 contributes to the ATP binding site; the sequence is GLDR.

Belongs to the class-II aminoacyl-tRNA synthetase family. Type 1 subfamily. In terms of assembly, homodimer.

Its subcellular location is the cytoplasm. The enzyme catalyses tRNA(Asx) + L-aspartate + ATP = L-aspartyl-tRNA(Asx) + AMP + diphosphate. Its function is as follows. Aspartyl-tRNA synthetase with relaxed tRNA specificity since it is able to aspartylate not only its cognate tRNA(Asp) but also tRNA(Asn). Reaction proceeds in two steps: L-aspartate is first activated by ATP to form Asp-AMP and then transferred to the acceptor end of tRNA(Asp/Asn). In Psychrobacter arcticus (strain DSM 17307 / VKM B-2377 / 273-4), this protein is Aspartate--tRNA(Asp/Asn) ligase.